A 580-amino-acid chain; its full sequence is Tetratricopeptide repeat protein 39C (580 aa).

TPR repeat units lie at residues 312-345, 350-383, and 482-515; these read SLFMFFKGRIQRLECQINSALTSFHTALELAVDQ, HVCLYEIGWCSMIELNFKDAFDSFERLKNESRWS, and GLKHLLLGAIHKCLGNSQDALQFFQRAARDELCR.

This sequence belongs to the TTC39 family.

The sequence is that of Tetratricopeptide repeat protein 39C (Ttc39c) from Mus musculus (Mouse).